Here is a 312-residue protein sequence, read N- to C-terminus: Acetyl-coenzyme A carboxylase carboxyl transferase subunit alpha (312 aa).

In terms of domain architecture, CoA carboxyltransferase C-terminal spans 36–286 (RLDKEVKSIY…KEYFLDALRT (251 aa)).

This sequence belongs to the AccA family. In terms of assembly, acetyl-CoA carboxylase is a heterohexamer composed of biotin carboxyl carrier protein (AccB), biotin carboxylase (AccC) and two subunits each of ACCase subunit alpha (AccA) and ACCase subunit beta (AccD).

The protein resides in the cytoplasm. It catalyses the reaction N(6)-carboxybiotinyl-L-lysyl-[protein] + acetyl-CoA = N(6)-biotinyl-L-lysyl-[protein] + malonyl-CoA. It participates in lipid metabolism; malonyl-CoA biosynthesis; malonyl-CoA from acetyl-CoA: step 1/1. Functionally, component of the acetyl coenzyme A carboxylase (ACC) complex. First, biotin carboxylase catalyzes the carboxylation of biotin on its carrier protein (BCCP) and then the CO(2) group is transferred by the carboxyltransferase to acetyl-CoA to form malonyl-CoA. This chain is Acetyl-coenzyme A carboxylase carboxyl transferase subunit alpha, found in Helicobacter pylori (strain ATCC 700392 / 26695) (Campylobacter pylori).